A 411-amino-acid polypeptide reads, in one-letter code: Phospholipase ABHD3 (411 aa).

A helical; Signal-anchor for type II membrane protein membrane pass occupies residues valine 25 to alanine 45. The AB hydrolase-1 domain occupies proline 140 to valine 247. Residues serine 220, aspartate 346, and histidine 375 each act as charge relay system in the active site.

The protein belongs to the AB hydrolase superfamily. AB hydrolase 4 family.

It is found in the membrane. The catalysed reaction is a 1,2-diacyl-sn-glycero-3-phosphocholine + H2O = a 1-acyl-sn-glycero-3-phosphocholine + a fatty acid + H(+). It catalyses the reaction a 1,2-diacyl-sn-glycero-3-phosphocholine + H2O = a 2-acyl-sn-glycero-3-phosphocholine + a fatty acid + H(+). The enzyme catalyses 1-tetradecanoyl-2-(9Z,12Z-octadecadienoyl)-sn-glycero-3-phosphocholine + H2O = 2-(9Z,12Z-octadecadienoyl)-sn-glycero-3-phosphocholine + tetradecanoate + H(+). It carries out the reaction 1-tetradecanoyl-2-(9Z,12Z-octadecadienoyl)-sn-glycero-3-phosphocholine + H2O = 1-tetradecanoyl-sn-glycero-3-phosphocholine + (9Z,12Z)-octadecadienoate + H(+). The catalysed reaction is 1-tetradecanoyl-2-(5Z,8Z,11Z,14Z-eicosatetraenoyl)-sn-glycero-3-phosphocholine + H2O = 2-(5Z,8Z,11Z,14Z)-eicosatetraenoyl-sn-glycero-3-phosphocholine + tetradecanoate + H(+). It catalyses the reaction 1-tetradecanoyl-2-(4Z,7Z,10Z,13Z,16Z,19Z-docosahexaenoyl)-sn-glycero-3-phosphocholine + H2O = 2-(4Z,7Z,10Z,13Z,16Z,19Z-docosahexaenoyl)-sn-glycero-3-phosphocholine + tetradecanoate + H(+). The enzyme catalyses 1,2-ditetradecanoyl-sn-glycero-3-phosphocholine + H2O = 2-tetradecanoyl-sn-glycero-3-phosphocholine + tetradecanoate + H(+). It carries out the reaction 1-octadecanoyl-2-acetyl-sn-glycero-3-phosphocholine + H2O = 1-octadecanoyl-sn-glycero-3-phosphocholine + acetate + H(+). The catalysed reaction is 1,2-ditetradecanoyl-sn-glycero-3-phosphocholine + H2O = 1-tetradecanoyl-sn-glycero-3-phosphocholine + tetradecanoate + H(+). It catalyses the reaction 1-octadecanoyl-2-pentanoyl-sn-glycero-3-phosphocholine + H2O = pentanoate + 1-octadecanoyl-sn-glycero-3-phosphocholine + H(+). The enzyme catalyses 1-octadecanoyl-2-hexanoyl-sn-glycero-3-phosphocholine + H2O = hexanoate + 1-octadecanoyl-sn-glycero-3-phosphocholine + H(+). It carries out the reaction 1-octadecanoyl-2-octanoyl-sn-glycero-3-phosphocholine + H2O = 1-octadecanoyl-sn-glycero-3-phosphocholine + octanoate + H(+). The catalysed reaction is 1-octadecanoyl-2-nonanoyl-sn-glycero-3-phosphocholine + H2O = nonanoate + 1-octadecanoyl-sn-glycero-3-phosphocholine + H(+). It catalyses the reaction 1-O-hexadecyl-2-nonadioyl-sn-glycero-3-phosphocholine + H2O = nonanedioate + 1-O-hexadecyl-sn-glycero-3-phosphocholine + H(+). The enzyme catalyses 1-hexadecanoyl-2-nonadioyl-sn-glycero-3-phosphocholine + H2O = nonanedioate + 1-hexadecanoyl-sn-glycero-3-phosphocholine + H(+). It carries out the reaction 1-hexadecanoyl-2-(9-oxononanoyl)-sn-glycero-3-phosphocholine + H2O = 9-oxononanoate + 1-hexadecanoyl-sn-glycero-3-phosphocholine + H(+). The catalysed reaction is 1-hexadecanoyl-2-(5-oxopentanoyl)-sn-glycero-3-phosphocholine + H2O = 5-oxopentanoate + 1-hexadecanoyl-sn-glycero-3-phosphocholine + H(+). It catalyses the reaction 1-hexadecanoyl-2-glutaroyl-sn-glycero-3-phosphocholine + H2O = glutarate + 1-hexadecanoyl-sn-glycero-3-phosphocholine + H(+). The enzyme catalyses 1-O-hexadecyl-2-acetyl-sn-glycero-3-phosphocholine + H2O = 1-O-hexadecyl-sn-glycero-3-phosphocholine + acetate + H(+). Phospholipase that may play a role in phospholipids remodeling. May selectively cleave myristate (C14)-containing phosphatidylcholines through its predominant phospholipase 1 activity, cleaving preferentially acyl groups in sn1 position. In parallel, may have a minor phospholipase 2 activity acting on acyl groups in position sn2. In addition to (C14)-containing phosphatidylcholines, may also act on other medium-chain-containing and oxidatively truncated phospholipids. The sequence is that of Phospholipase ABHD3 from Bos taurus (Bovine).